Here is a 1051-residue protein sequence, read N- to C-terminus: Integrin alpha-3 (1051 aa).

Residues 1–32 form the signal peptide; it reads MGPGPRCAPGDPGWMLGALALMVAASGRFAFA. Residues 33–991 are Extracellular-facing; sequence FNLDTRFLVV…LVEELPAEIE (959 aa). FG-GAP repeat units lie at residues 38–103, 110–171, 185–235, 236–292, 293–354, 356–411, and 415–477; these read RFLV…KDDC, EKSD…DLQL, CNSN…WDLS, EYSY…GGDL, KRKQ…TSFP, QPSL…GLLR, and QIVH…VARP. A glycan (N-linked (GlcNAc...) asparagine) is linked at Asn86. 3 disulfide bridges follow: Cys94/Cys103, Cys140/Cys162, and Cys185/Cys197. Residues Asp315, Asn317, Asp319, Asp323, Asp378, Asn380, Asp382, Asp386, Asp439, Asp441, Asn443, Tyr445, and Asp447 each coordinate Ca(2+). 2 disulfide bridges follow: Cys485–Cys490 and Cys496–Cys550. N-linked (GlcNAc...) asparagine glycosylation is found at Asn500, Asn511, Asn573, and Asn605. An intrachain disulfide couples Cys615 to Cys621. 3 N-linked (GlcNAc...) asparagine glycosylation sites follow: Asn656, Asn697, and Asn841. Cysteines 694 and 702 form a disulfide. 2 disulfides stabilise this stretch: Cys846–Cys904 and Cys911–Cys916. The tract at residues 860-888 is disordered; it reads LSDPGDKPHSPQRRRRQLDPGGDQGSPPV. 4 N-linked (GlcNAc...) asparagine glycosylation sites follow: Asn923, Asn926, Asn935, and Asn969. A helical transmembrane segment spans residues 992 to 1019; that stretch reads LWLVLVAVSAGLLLLGLIIILLWKCGFF. Residues 1017-1021 carry the GFFKR motif motif; sequence GFFKR. Residues 1020-1051 are Cytoplasmic-facing; that stretch reads KRARTRALYEAKRQKAEMKSQPSETERLTDDY.

This sequence belongs to the integrin alpha chain family. In terms of assembly, heterodimer of an alpha and a beta subunit. The alpha subunit is composed of a heavy and a light chain linked by a disulfide bond. Alpha-3 associates with beta-1. Interacts with HPS5. Interacts with FAP (seprase); the interaction occurs at the cell surface of invadopodia membrane in a collagen-dependent manner. Post-translationally, isoform 1, but not isoform 2, is phosphorylated on serine residues.

It is found in the cell membrane. The protein localises to the cell projection. It localises to the invadopodium membrane. The protein resides in the filopodium membrane. Functionally, integrin alpha-3/beta-1 is a receptor for fibronectin, laminin, collagen, epiligrin, thrombospondin and CSPG4. Integrin alpha-3/beta-1 provides a docking site for FAP (seprase) at invadopodia plasma membranes in a collagen-dependent manner and hence may participate in the adhesion, formation of invadopodia and matrix degradation processes, promoting cell invasion. Alpha-3/beta-1 may mediate with LGALS3 the stimulation by CSPG4 of endothelial cells migration. This Cricetulus griseus (Chinese hamster) protein is Integrin alpha-3 (ITGA3).